The primary structure comprises 265 residues: Sarcotoxin II-1 (265 aa).

The first 22 residues, 1-22, serve as a signal peptide directing secretion; it reads MKSFVLFAACMAIIALGSLAHA. Residues 23–24 constitute a propeptide, removed by a dipeptidylpeptidase; sequence YP. Gln-25 carries the post-translational modification Pyrrolidone carboxylic acid. Gly-264 is subject to Glycine amide.

The protein belongs to the attacin/sarcotoxin-2 family. As to expression, synthesized by the fat body and is eventually secreted into the hemolymph.

The protein localises to the secreted. Sarcotoxin II is an antibacterial protein which plays a role in the inflammatory response of this insect. The main effect of sarcotoxin II on E.coli may be the inhibition of cell wall synthesis, including septum formation. The protein is Sarcotoxin II-1 of Sarcophaga peregrina (Flesh fly).